A 524-amino-acid polypeptide reads, in one-letter code: Probable metalloreductase AIM14 (524 aa).

7 helical membrane passes run 24-44 (VNIKYGYVILALSIVHMVLSI), 69-89 (SIPFWVSTLVWLAIFAFLSIF), 104-121 (RLGRMAYCLVPFTIFISL), 143-163 (WISRLIFATAIGHGLGFLYKW), 179-199 (FLGVTVFALMPVLIFASVNVM), 206-226 (LFYILHNVTLWMFVVLIAFHA), and 230-250 (VPLLAVINLALLGYQIYQRFF). The Ferric oxidoreductase domain occupies 105 to 222 (LGRMAYCLVP…VTLWMFVVLI (118 aa)). The FAD-binding FR-type domain maps to 248 to 372 (RFFKSYYLHD…GGSGISFGLP (125 aa)).

Belongs to the ferric reductase (FRE) family. AIM14 subfamily.

Its subcellular location is the membrane. Functionally, probable cell surface metalloreductase. May be involved in iron or copper homeostasis. This chain is Probable metalloreductase AIM14 (AIM14), found in Scheffersomyces stipitis (strain ATCC 58785 / CBS 6054 / NBRC 10063 / NRRL Y-11545) (Yeast).